A 341-amino-acid chain; its full sequence is Tetraacyldisaccharide 4'-kinase (341 aa).

57 to 64 (TVGGTGKT) serves as a coordination point for ATP.

The protein belongs to the LpxK family.

The enzyme catalyses a lipid A disaccharide + ATP = a lipid IVA + ADP + H(+). It functions in the pathway glycolipid biosynthesis; lipid IV(A) biosynthesis; lipid IV(A) from (3R)-3-hydroxytetradecanoyl-[acyl-carrier-protein] and UDP-N-acetyl-alpha-D-glucosamine: step 6/6. In terms of biological role, transfers the gamma-phosphate of ATP to the 4'-position of a tetraacyldisaccharide 1-phosphate intermediate (termed DS-1-P) to form tetraacyldisaccharide 1,4'-bis-phosphate (lipid IVA). The sequence is that of Tetraacyldisaccharide 4'-kinase from Maricaulis maris (strain MCS10) (Caulobacter maris).